The primary structure comprises 118 residues: MFRYKQVMVIRKDLKLSKGKMAVQVAHGAVTAALKVQKEKPEWFKAWFHEGQKKVVVKAENERELFELKAHAEKLGIPTALIRDAGLTEIPPGTITCLAVGPAPEELVDKVTGHLKLV.

The protein belongs to the PTH2 family.

The protein resides in the cytoplasm. The enzyme catalyses an N-acyl-L-alpha-aminoacyl-tRNA + H2O = an N-acyl-L-amino acid + a tRNA + H(+). The natural substrate for this enzyme may be peptidyl-tRNAs which drop off the ribosome during protein synthesis. The sequence is that of Peptidyl-tRNA hydrolase from Thermococcus onnurineus (strain NA1).